The chain runs to 362 residues: Hepatic sodium/bile acid cotransporter (362 aa).

At 1–22 (MEVHNVSAPFNFSLPPGFGHRA) the chain is on the extracellular side. N-linked (GlcNAc...) asparagine glycans are attached at residues Asn-5 and Asn-11. Residues 23–44 (TDKALSIILVLMLLLIMLSLGC) traverse the membrane as a helical segment. At 45–47 (TME) the chain is on the cytoplasmic side. A helical transmembrane segment spans residues 48-83 (FSKIKAHLWKPKGVIVALVAQFGIMPLAAFLLGKIF). Over 84–86 (HLS) the chain is Extracellular. A discontinuously helical membrane pass occupies residues 87–112 (NIEALAILICGCSPGGNLSNLFTLAM). Residues 113-115 (KGD) are Cytoplasmic-facing. The chain crosses the membrane as a helical span at residues 116 to 142 (MNLSIVMTTCSSFSALGMMPLLLYVYS). At 143–156 (KGIYDGDLKDKVPY) the chain is on the extracellular side. Residues 157–179 (KGIMISLVIVLIPCTIGIVLKSK) form a helical membrane-spanning segment. Residues 180–183 (RPHY) lie on the Cytoplasmic side of the membrane. The helical transmembrane segment at 184-217 (VPYILKGGMIITFLLSVAVTALSVINVGNSIMFV) threads the bilayer. The Extracellular segment spans residues 218–219 (MT). Residues 220 to 243 (PHLLATSSLMPFSGFLMGYILSAL) form a helical membrane-spanning segment. At 244-247 (FQLN) the chain is on the cytoplasmic side. Residues 248–273 (PSCRRTISMETGFQNIQLCSTILNVT) form a discontinuously helical membrane-spanning segment. At 274–280 (FPPEVIG) the chain is on the extracellular side. The chain crosses the membrane as a helical span at residues 281-311 (PLFFFPLLYMIFQLAEGLLIIIIFRCYEKIK). Residues 312-362 (PPKDQTKITYKAAATEDATPAALEKGTHNGNIPPLQPGPSPNGLNSGQMAN) are Cytoplasmic-facing. A Phosphothreonine modification is found at Thr-330. Residues 333–362 (ALEKGTHNGNIPPLQPGPSPNGLNSGQMAN) form a disordered region. Residues 353 to 362 (NGLNSGQMAN) are compositionally biased toward polar residues.

Belongs to the bile acid:sodium symporter (BASS) (TC 2.A.28) family. As to expression, highly expressed in liver and low expression in kidney.

It localises to the cell membrane. The catalysed reaction is taurocholate(out) + 2 Na(+)(out) = taurocholate(in) + 2 Na(+)(in). It catalyses the reaction taurochenodeoxycholate(out) + 2 Na(+)(out) = taurochenodeoxycholate(in) + 2 Na(+)(in). The enzyme catalyses tauroursodeoxycholate(out) + 2 Na(+)(out) = tauroursodeoxycholate(in) + 2 Na(+)(in). It carries out the reaction glycocholate(out) + 2 Na(+)(out) = glycocholate(in) + 2 Na(+)(in). The catalysed reaction is estrone 3-sulfate(out) + 2 Na(+)(out) = estrone 3-sulfate(in) + 2 Na(+)(in). It catalyses the reaction cholate(out) + 2 Na(+)(out) = cholate(in) + 2 Na(+)(in). The enzyme catalyses tauronorcholate(out) + 2 Na(+)(out) = tauronorcholate(in) + 2 Na(+)(in). It carries out the reaction taurodeoxycholate(out) + 2 Na(+)(out) = taurodeoxycholate(in) + 2 Na(+)(in). The catalysed reaction is tauroallocholate(out) + 2 Na(+)(out) = tauroallocholate(in) + 2 Na(+)(in). It catalyses the reaction taurohyodeoxycholate(out) + 2 Na(+)(out) = taurohyodeoxycholate(in) + 2 Na(+)(in). The enzyme catalyses taurohyocholate(out) + 2 Na(+)(out) = taurohyocholate(in) + 2 Na(+)(in). It carries out the reaction tauro-beta-muricholate(out) + 2 Na(+)(out) = tauro-beta-muricholate(in) + 2 Na(+)(in). Its activity is regulated as follows. The transport of bile acids is sodium-dependent. Its function is as follows. As a major transporter of conjugated bile salts from plasma into the hepatocyte, it plays a key role in the enterohepatic circulation of bile salts necessary for the solubilization and absorption of dietary fat and fat-soluble vitamins. It is strictly dependent on the extracellular presence of sodium. It exhibits broad substrate specificity and transports various bile acids, such as taurocholate, cholate, as well as non-bile acid organic compounds, such as estrone sulfate. Works collaboratively with the ileal transporter (NTCP2), the organic solute transporter (OST), and the bile salt export pump (BSEP), to ensure efficacious biological recycling of bile acids during enterohepatic circulation. The sequence is that of Hepatic sodium/bile acid cotransporter (Slc10a1) from Rattus norvegicus (Rat).